The following is a 356-amino-acid chain: Protein RecA (356 aa).

ATP is bound at residue 77 to 84; the sequence is GPESSGKT.

This sequence belongs to the RecA family.

Its subcellular location is the cytoplasm. In terms of biological role, can catalyze the hydrolysis of ATP in the presence of single-stranded DNA, the ATP-dependent uptake of single-stranded DNA by duplex DNA, and the ATP-dependent hybridization of homologous single-stranded DNAs. It interacts with LexA causing its activation and leading to its autocatalytic cleavage. This is Protein RecA from Caulobacter sp. (strain K31).